The chain runs to 85 residues: uncharacterized protein (85 aa).

The protein to A.fulgidus AF_0255 and AF_1363.

This is an uncharacterized protein from Archaeoglobus fulgidus (strain ATCC 49558 / DSM 4304 / JCM 9628 / NBRC 100126 / VC-16).